The sequence spans 188 residues: MTIYYMIVFMLLMVEIVSFVILSLPLPLKVRRAILNAISNSPFAGRVKHVLKITIICILILFADSVRRVVRVTKEYDLAIAAPSTTESARSGYKASQFYAQRNLYLCGSALFLSLVVNRYYLALEAMIAAQDKMQALQTQVEASTNNAKAVEELETLRTKLETRDKEYETLAEKYAAVTKTVEKKKDI.

Helical transmembrane passes span 6-26 (MIVF…SLPL), 43-63 (FAGR…ILFA), and 110-130 (ALFL…MIAA).

It is found in the membrane. This is an uncharacterized protein from Schizosaccharomyces pombe (strain 972 / ATCC 24843) (Fission yeast).